Reading from the N-terminus, the 59-residue chain is Protein translocase subunit SecE (59 aa).

The helical transmembrane segment at 39–59 (VMALFLGLIDALFVALLSFFF) threads the bilayer.

Belongs to the SecE/SEC61-gamma family. Component of the Sec protein translocase complex. Heterotrimer consisting of SecY, SecE and SecG subunits. The heterotrimers can form oligomers, although 1 heterotrimer is thought to be able to translocate proteins. Interacts with the ribosome. Interacts with SecDF, and other proteins may be involved. Interacts with SecA.

The protein localises to the cell inner membrane. In terms of biological role, essential subunit of the Sec protein translocation channel SecYEG. Clamps together the 2 halves of SecY. May contact the channel plug during translocation. The chain is Protein translocase subunit SecE from Treponema pallidum (strain Nichols).